The primary structure comprises 314 residues: Serine protease 46 (314 aa).

Residues 44–281 (VVNGKAVEVG…FTQWIKRQIG (238 aa)) form the Peptidase S1 domain. The cysteines at positions 69 and 85 are disulfide-linked. Catalysis depends on charge relay system residues His-84 and Asp-130. Cystine bridges form between Cys-164–Cys-239, Cys-197–Cys-219, and Cys-229–Cys-257. The Charge relay system role is filled by Ser-233. The chain crosses the membrane as a helical span at residues 293–313 (FLSPFILTGYILLVSLGSLWL).

The protein belongs to the peptidase S1 family.

Its subcellular location is the membrane. The polypeptide is Serine protease 46 (Prss46) (Mus musculus (Mouse)).